The chain runs to 260 residues: Ribosomal RNA small subunit methyltransferase J (260 aa).

S-adenosyl-L-methionine is bound by residues 108–109 (RD), 124–125 (ER), and D178.

It belongs to the methyltransferase superfamily. RsmJ family.

The protein localises to the cytoplasm. The catalysed reaction is guanosine(1516) in 16S rRNA + S-adenosyl-L-methionine = N(2)-methylguanosine(1516) in 16S rRNA + S-adenosyl-L-homocysteine + H(+). Its function is as follows. Specifically methylates the guanosine in position 1516 of 16S rRNA. The sequence is that of Ribosomal RNA small subunit methyltransferase J from Ectopseudomonas mendocina (strain ymp) (Pseudomonas mendocina).